The chain runs to 199 residues: NAD(P)H dehydrogenase (quinone) (199 aa).

In terms of domain architecture, Flavodoxin-like spans 4 to 190 (VLVLYYSAYG…AGARYQGKTI (187 aa)). Residues 10 to 15 (SAYGHI) and 78 to 80 (TRF) contribute to the FMN site. Residue Tyr-12 coordinates NAD(+). Trp-98 serves as a coordination point for substrate. FMN-binding positions include 113-119 (STATQHG) and His-134.

It belongs to the WrbA family. Requires FMN as cofactor.

The enzyme catalyses a quinone + NADH + H(+) = a quinol + NAD(+). It carries out the reaction a quinone + NADPH + H(+) = a quinol + NADP(+). The sequence is that of NAD(P)H dehydrogenase (quinone) from Rhodopseudomonas palustris (strain BisB5).